The chain runs to 138 residues: Photosystem II extrinsic protein U (138 aa).

The N-terminal stretch at 1–28 (MSRVVSALMGLVLMFGCAFFSVQPQAQA) is a signal peptide. Residues 29–42 (LDLSNGFVSAAVLG) constitute a propeptide that is removed on maturation.

This sequence belongs to the PsbU family. PSII is composed of 1 copy each of membrane proteins PsbA, PsbB, PsbC, PsbD, PsbE, PsbF, PsbH, PsbI, PsbJ, PsbK, PsbL, PsbM, PsbT, PsbX, PsbY, PsbZ, Psb30/Ycf12, peripheral proteins PsbO, CyanoQ (PsbQ), PsbU, PsbV and a large number of cofactors. It forms dimeric complexes.

The protein resides in the cellular thylakoid membrane. Its function is as follows. One of the extrinsic, lumenal subunits of photosystem II (PSII). PSII is a light-driven water plastoquinone oxidoreductase, using light energy to abstract electrons from H(2)O, generating a proton gradient subsequently used for ATP formation. The extrinsic proteins stabilize the structure of photosystem II oxygen-evolving complex (OEC), the ion environment of oxygen evolution and protect the OEC against heat-induced inactivation. In Picosynechococcus sp. (strain ATCC 27264 / PCC 7002 / PR-6) (Agmenellum quadruplicatum), this protein is Photosystem II extrinsic protein U.